We begin with the raw amino-acid sequence, 455 residues long: MVNKNAIILAAGKGTRMKSKLHKVLHQVCGKTMVEHVLTQLQAADIQNIVTVVGYGADTVKDALGDQVRYALQKQQLGTGHAVMQTEDLLGELAGQTLVVSGDTPLFTAATFNHLFQYHEQRHAAVTILTSKAPDPTGYGRIVRNEIGIVERIVEQKDASVEEQAIHEINTGVYCFDNQKLFAALKRLTNDNAQGEYYLTDVIGILKEEGEIVTAYQMEDFDESMGVNDRSALAKATKIMQKRINTQLMKDGVTLVDPETAYIDTDVQIGQDTVIEGNVVIKGRTTIGADCLIGAGSRIEDSTLHDDVTIMSSTLERSEVHSGADVGPNSHLRPEAELGENVHVGNFCEVKKAYIGAGTKVGHLSYIGDATLGKNINVGCGVVFVNYDGTNKLHTNVGDHAFIGSNSNIVAPVNIAADSFVAAGSTITDSTEQFDMAIARARQVNKPGYAKKLPW.

A pyrophosphorylase region spans residues 1–230 (MVNKNAIILA…FDESMGVNDR (230 aa)). Residues 9 to 12 (LAAG), Lys-23, Gln-73, 78 to 79 (GT), 101 to 103 (SGD), Gly-140, Glu-155, Asn-170, and Asn-228 each bind UDP-N-acetyl-alpha-D-glucosamine. Residue Asp-103 participates in Mg(2+) binding. Residue Asn-228 coordinates Mg(2+). Residues 231-251 (SALAKATKIMQKRINTQLMKD) form a linker region. An N-acetyltransferase region spans residues 252 to 455 (GVTLVDPETA…KPGYAKKLPW (204 aa)). UDP-N-acetyl-alpha-D-glucosamine contacts are provided by Arg-333 and Lys-351. The active-site Proton acceptor is the His-363. Residues Tyr-366 and Asn-377 each contribute to the UDP-N-acetyl-alpha-D-glucosamine site. Acetyl-CoA contacts are provided by residues 386–387 (NY), Ser-405, Ala-423, and Arg-440.

This sequence in the N-terminal section; belongs to the N-acetylglucosamine-1-phosphate uridyltransferase family. In the C-terminal section; belongs to the transferase hexapeptide repeat family. In terms of assembly, homotrimer. The cofactor is Mg(2+).

Its subcellular location is the cytoplasm. It catalyses the reaction alpha-D-glucosamine 1-phosphate + acetyl-CoA = N-acetyl-alpha-D-glucosamine 1-phosphate + CoA + H(+). The enzyme catalyses N-acetyl-alpha-D-glucosamine 1-phosphate + UTP + H(+) = UDP-N-acetyl-alpha-D-glucosamine + diphosphate. It participates in nucleotide-sugar biosynthesis; UDP-N-acetyl-alpha-D-glucosamine biosynthesis; N-acetyl-alpha-D-glucosamine 1-phosphate from alpha-D-glucosamine 6-phosphate (route II): step 2/2. Its pathway is nucleotide-sugar biosynthesis; UDP-N-acetyl-alpha-D-glucosamine biosynthesis; UDP-N-acetyl-alpha-D-glucosamine from N-acetyl-alpha-D-glucosamine 1-phosphate: step 1/1. The protein operates within bacterial outer membrane biogenesis; LPS lipid A biosynthesis. Functionally, catalyzes the last two sequential reactions in the de novo biosynthetic pathway for UDP-N-acetylglucosamine (UDP-GlcNAc). The C-terminal domain catalyzes the transfer of acetyl group from acetyl coenzyme A to glucosamine-1-phosphate (GlcN-1-P) to produce N-acetylglucosamine-1-phosphate (GlcNAc-1-P), which is converted into UDP-GlcNAc by the transfer of uridine 5-monophosphate (from uridine 5-triphosphate), a reaction catalyzed by the N-terminal domain. This is Bifunctional protein GlmU from Limosilactobacillus fermentum (strain NBRC 3956 / LMG 18251) (Lactobacillus fermentum).